We begin with the raw amino-acid sequence, 35 residues long: Turgencin-B (35 aa).

Methionine sulfoxide is present on residues M5 and M9. 3 cysteine pairs are disulfide-bonded: C7/C31, C11/C27, and C16/C24. A Glycine amide modification is found at G35.

In terms of processing, oxidation likely reduces antimicrobial activity against Gram-positive bacteria and Gram-negative bacteria.

The protein localises to the secreted. Functionally, has antimicrobial activity against Gram-positive bacteria (C.glutamicum ATCC 13032 (MIC=1.6 uM) and B.subtilis ATCC 23857 (MIC=1.6 uM)) and Gram-negative bacteria (E.coli ATCC 25922 (MIC=12.5 uM) and P.aeruginosa ATCC 27853 (MIC=25.0 uM)). Displays very low activity against the Gram-positive bacteria S.aureus ATCC 9144 (MIC&gt;100 uM). The chain is Turgencin-B from Synoicum turgens (Colonial ascidian).